The following is a 164-amino-acid chain: Peptidyl-prolyl cis-trans isomerase A (164 aa).

Methionine 1 carries the N-acetylmethionine modification. Valine 2 is subject to N-acetylvaline; in Peptidyl-prolyl cis-trans isomerase A, N-terminally processed. The region spanning 7–163 (FFDITADGEP…KKITISDCGQ (157 aa)) is the PPIase cyclophilin-type domain. Lysine 28 bears the N6-acetyllysine; alternate mark. A Glycyl lysine isopeptide (Lys-Gly) (interchain with G-Cter in SUMO2); alternate cross-link involves residue lysine 28. Lysine 28 participates in a covalent cross-link: Glycyl lysine isopeptide (Lys-Gly) (interchain with G-Cter in ubiquitin); alternate. N6-acetyllysine is present on residues lysine 44 and lysine 76. Serine 77 bears the Phosphoserine mark. Lysine 82 bears the N6-acetyllysine; alternate mark. Residue lysine 82 forms a Glycyl lysine isopeptide (Lys-Gly) (interchain with G-Cter in SUMO2); alternate linkage. At threonine 93 the chain carries Phosphothreonine. N-linked (GlcNAc...) asparagine glycosylation is present at asparagine 108. Residues lysine 125, lysine 131, and lysine 133 each carry the N6-acetyllysine modification.

The protein belongs to the cyclophilin-type PPIase family. PPIase A subfamily. Interacts with protein phosphatase PPP3CA/calcineurin A. Interacts with isoform 2 of BSG/CD147. Interacts with FOXO1; the interaction promotes FOXO1 dephosphorylation, nuclear accumulation and transcriptional activity. Interacts with integrin ITGA2B:ITGB3; the interaction is ROS and peptidyl-prolyl cis-trans isomerase (PPIase) activity-dependent and is increased in the presence of thrombin. Interacts with MAP3K5. Interacts with TARDBP; the interaction is dependent on the RNA-binding activity of TARDBP and the PPIase activity of PPIA/CYPA and the acetylation of PPIA/CYPA at Lys-125 favors the interaction. Interacts with HNRNPA1, HNRNPA2B1, HNRNPC, RBMX, HNRNPK and HNRNPM. In terms of processing, acetylation at Lys-125 markedly inhibits catalysis of cis to trans isomerization. PPIA acetylation also antagonizes the immunosuppressive effects of cyclosporine by inhibiting the sequential steps of cyclosporine binding and calcineurin inhibition. Acetylation at Lys-125 favors the interaction with TARDBP.

The protein localises to the cytoplasm. The protein resides in the secreted. It localises to the nucleus. It carries out the reaction [protein]-peptidylproline (omega=180) = [protein]-peptidylproline (omega=0). Binds cyclosporin A (CsA). CsA mediates some of its effects via an inhibitory action on PPIase. Functionally, catalyzes the cis-trans isomerization of proline imidic peptide bonds in oligopeptides. Exerts a strong chemotactic effect on leukocytes partly through activation of one of its membrane receptors BSG/CD147, initiating a signaling cascade that culminates in MAPK/ERK activation. Activates endothelial cells (ECs) in a proinflammatory manner by stimulating activation of NF-kappa-B and ERK, JNK and p38 MAP-kinases and by inducing expression of adhesion molecules including SELE and VCAM1. Induces apoptosis in ECs by promoting the FOXO1-dependent expression of CCL2 and BCL2L11 which are involved in EC chemotaxis and apoptosis. In response to oxidative stress, initiates proapoptotic and antiapoptotic signaling in ECs via activation of NF-kappa-B and AKT1 and up-regulation of antiapoptotic protein BCL2. Negatively regulates MAP3K5/ASK1 kinase activity, autophosphorylation and oxidative stress-induced apoptosis mediated by MAP3K5/ASK1. Necessary for the assembly of TARDBP in heterogeneous nuclear ribonucleoprotein (hnRNP) complexes and regulates TARDBP binding to RNA UG repeats and TARDBP-dependent expression of HDAC6, ATG7 and VCP which are involved in clearance of protein aggregates. Plays an important role in platelet activation and aggregation. Regulates calcium mobilization and integrin ITGA2B:ITGB3 bidirectional signaling via increased ROS production as well as by facilitating the interaction between integrin and the cell cytoskeleton. Binds heparan sulfate glycosaminoglycans. In Rattus norvegicus (Rat), this protein is Peptidyl-prolyl cis-trans isomerase A (Ppia).